Reading from the N-terminus, the 264-residue chain is MMESIKKLRELTGAGMMDVKKALSDAGNDEDKAVALLRERGIVKAAKKADREAKEGIVRFVVEGNRAAIVEVNSETDFVARNSDFQALVEKLAQTALSAKTNDVEEFRNFSMDGETVGTVVAAAAGKIGENLVLNRVAYIEGDKVAGYVHSNGKIGVLVDVAGGDETKAKDVALHVAAERPQYLSRDEVNQDDIEKEREILTNKALNEGKPQQIVEKIVSGQIGKFYEEKVLPEQRYVKDNSMTVGQYLGDASVKRFVRFEIGA.

Residues 76–79 form an involved in Mg(2+) ion dislocation from EF-Tu region; it reads TDFV.

This sequence belongs to the EF-Ts family.

Its subcellular location is the cytoplasm. In terms of biological role, associates with the EF-Tu.GDP complex and induces the exchange of GDP to GTP. It remains bound to the aminoacyl-tRNA.EF-Tu.GTP complex up to the GTP hydrolysis stage on the ribosome. This Deinococcus deserti (strain DSM 17065 / CIP 109153 / LMG 22923 / VCD115) protein is Elongation factor Ts.